The sequence spans 424 residues: Adenylosuccinate synthetase (424 aa).

GTP-binding positions include 12–18 (GDEGKGK) and 40–42 (GHT). Catalysis depends on Asp-13, which acts as the Proton acceptor. Mg(2+)-binding residues include Asp-13 and Gly-40. IMP is bound by residues 13–16 (DEGK), 38–41 (NAGH), Thr-130, Arg-144, Asn-220, Thr-235, and Arg-299. His-41 serves as the catalytic Proton donor. Residue 295–301 (VTTGRRR) coordinates substrate. Residues Arg-301, 327-329 (KLD), and 412-414 (GTG) each bind GTP.

Belongs to the adenylosuccinate synthetase family. In terms of assembly, homodimer. The cofactor is Mg(2+).

It localises to the cytoplasm. It catalyses the reaction IMP + L-aspartate + GTP = N(6)-(1,2-dicarboxyethyl)-AMP + GDP + phosphate + 2 H(+). The protein operates within purine metabolism; AMP biosynthesis via de novo pathway; AMP from IMP: step 1/2. Functionally, plays an important role in the de novo pathway and in the salvage pathway of purine nucleotide biosynthesis. Catalyzes the first committed step in the biosynthesis of AMP from IMP. The sequence is that of Adenylosuccinate synthetase from Aspergillus niger (strain ATCC MYA-4892 / CBS 513.88 / FGSC A1513).